A 149-amino-acid chain; its full sequence is Conglutin delta 3 (149 aa).

The N-terminal stretch at 1–22 is a signal peptide; it reads MAKLTILIALVAALVLVVHTSA. 4 cysteine pairs are disulfide-bonded: Cys30–Cys98, Cys42–Cys86, Cys87–Cys134, and Cys100–Cys142.

Belongs to the 2S seed storage albumins family. As to quaternary structure, heterodimer of a small chain and a large chain; disulfide-linked.

Its subcellular location is the endoplasmic reticulum. This Lupinus angustifolius (Narrow-leaved blue lupine) protein is Conglutin delta 3.